The chain runs to 210 residues: Large ribosomal subunit protein uL4 (210 aa).

The tract at residues 44-77 (ARQGNASSKTRSEVRGGGRKPWRQKGTGRARAGS) is disordered. Basic residues predominate over residues 60–71 (GGRKPWRQKGTG).

This sequence belongs to the universal ribosomal protein uL4 family. Part of the 50S ribosomal subunit.

In terms of biological role, one of the primary rRNA binding proteins, this protein initially binds near the 5'-end of the 23S rRNA. It is important during the early stages of 50S assembly. It makes multiple contacts with different domains of the 23S rRNA in the assembled 50S subunit and ribosome. Its function is as follows. Forms part of the polypeptide exit tunnel. This Microcystis aeruginosa (strain NIES-843 / IAM M-2473) protein is Large ribosomal subunit protein uL4.